Reading from the N-terminus, the 418-residue chain is MKPEILKLIRSKLDLTQKQASEIIEVSDKTWQQWESGKTEMHPAYYSFLQEKLKDKINFEELSAQKTLQKKIFDKYNQNQITKNAEELAEITHIEERKDAYSSDFKFIDLFSGIGGIRQSFEVNGGKCVFSSEIDPFAKFTYYTNFGVVPFGDITKVEATTIPQHDILCAGFPCQPFSHIGKREGFEHPTQGTMFHEIVRIIETKKTPVLFLENVPGLINHDDGNTLKVIIETLEDMGYKVHHTVLDASHFGIPQKRKRFYLVAFLNQNIHFEFPKPPMISKDIGEVLESDVTGYSISEHLQKSYLFKKDDGKPSLIDKNTTGAVKTLVSTYHKIQRLTGTFVKDGETGIRLLTTNECKAIMGFPKDFVIPVSRTQMYRQMGNSVVVPVVTKIAEQISLALKTVNQQSPQENFELELV.

The region spanning 105 to 404 (FKFIDLFSGI…EQISLALKTV (300 aa)) is the SAM-dependent MTase C5-type domain. Residue Cys174 is part of the active site.

Belongs to the class I-like SAM-binding methyltransferase superfamily. C5-methyltransferase family.

The enzyme catalyses a 2'-deoxycytidine in DNA + S-adenosyl-L-methionine = a 5-methyl-2'-deoxycytidine in DNA + S-adenosyl-L-homocysteine + H(+). A methylase, recognizes the double-stranded sequence 5'-CCGG-3', methylates C-1 on both strands, and protects the DNA from cleavage by the MspI endonuclease. The sequence is that of Type II methyltransferase M.MspI (mspIM) from Moraxella sp.